The chain runs to 190 residues: ATP synthase subunit delta (190 aa).

This sequence belongs to the ATPase delta chain family. As to quaternary structure, F-type ATPases have 2 components, F(1) - the catalytic core - and F(0) - the membrane proton channel. F(1) has five subunits: alpha(3), beta(3), gamma(1), delta(1), epsilon(1). F(0) has three main subunits: a(1), b(2) and c(10-14). The alpha and beta chains form an alternating ring which encloses part of the gamma chain. F(1) is attached to F(0) by a central stalk formed by the gamma and epsilon chains, while a peripheral stalk is formed by the delta and b chains.

It is found in the cell inner membrane. Its function is as follows. F(1)F(0) ATP synthase produces ATP from ADP in the presence of a proton or sodium gradient. F-type ATPases consist of two structural domains, F(1) containing the extramembraneous catalytic core and F(0) containing the membrane proton channel, linked together by a central stalk and a peripheral stalk. During catalysis, ATP synthesis in the catalytic domain of F(1) is coupled via a rotary mechanism of the central stalk subunits to proton translocation. In terms of biological role, this protein is part of the stalk that links CF(0) to CF(1). It either transmits conformational changes from CF(0) to CF(1) or is implicated in proton conduction. The polypeptide is ATP synthase subunit delta (Beijerinckia indica subsp. indica (strain ATCC 9039 / DSM 1715 / NCIMB 8712)).